The sequence spans 457 residues: Glutamate--tRNA ligase 2 (457 aa).

A 'HIGH' region motif is present at residues 8 to 18 (PSPTGYIHIGN). A 'KMSKS' region motif is present at residues 249-253 (GFSKR). Lys-252 serves as a coordination point for ATP.

The protein belongs to the class-I aminoacyl-tRNA synthetase family. Glutamate--tRNA ligase type 1 subfamily. As to quaternary structure, monomer.

Its subcellular location is the cytoplasm. It carries out the reaction tRNA(Glu) + L-glutamate + ATP = L-glutamyl-tRNA(Glu) + AMP + diphosphate. Its function is as follows. Catalyzes the attachment of glutamate to tRNA(Glu) in a two-step reaction: glutamate is first activated by ATP to form Glu-AMP and then transferred to the acceptor end of tRNA(Glu). The polypeptide is Glutamate--tRNA ligase 2 (Bartonella tribocorum (strain CIP 105476 / IBS 506)).